Reading from the N-terminus, the 672-residue chain is UvrABC system protein B (672 aa).

Positions 26 to 181 constitute a Helicase ATP-binding domain; it reads AGLEDGLAYQ…ILQRLAELQY (156 aa). 39 to 46 provides a ligand contact to ATP; the sequence is GVTGSGKT. Residues 92–115 carry the Beta-hairpin motif; the sequence is YYDYYQPEAYVPSSDTYIEKDASI. In terms of domain architecture, Helicase C-terminal spans 430-592; it reads QVDDLLSEIK…ITPKSIQKAV (163 aa). The UVR domain maps to 631–666; sequence AKELRKLEEQMYHHARNLEFEEAAAVRDKIQHIRKG.

Belongs to the UvrB family. As to quaternary structure, forms a heterotetramer with UvrA during the search for lesions. Interacts with UvrC in an incision complex.

It localises to the cytoplasm. Its function is as follows. The UvrABC repair system catalyzes the recognition and processing of DNA lesions. A damage recognition complex composed of 2 UvrA and 2 UvrB subunits scans DNA for abnormalities. Upon binding of the UvrA(2)B(2) complex to a putative damaged site, the DNA wraps around one UvrB monomer. DNA wrap is dependent on ATP binding by UvrB and probably causes local melting of the DNA helix, facilitating insertion of UvrB beta-hairpin between the DNA strands. Then UvrB probes one DNA strand for the presence of a lesion. If a lesion is found the UvrA subunits dissociate and the UvrB-DNA preincision complex is formed. This complex is subsequently bound by UvrC and the second UvrB is released. If no lesion is found, the DNA wraps around the other UvrB subunit that will check the other stand for damage. The polypeptide is UvrABC system protein B (Coxiella burnetii (strain Dugway 5J108-111)).